Here is a 61-residue protein sequence, read N- to C-terminus: Photosystem II reaction center protein K (61 aa).

A propeptide spanning residues 1–24 (MLNILSFIGICLNSFLYSSSFFVA) is cleaved from the precursor. A helical membrane pass occupies residues 40–60 (MPVIPLFFFLLAFVWQAAVSF).

Belongs to the PsbK family. As to quaternary structure, PSII is composed of 1 copy each of membrane proteins PsbA, PsbB, PsbC, PsbD, PsbE, PsbF, PsbH, PsbI, PsbJ, PsbK, PsbL, PsbM, PsbT, PsbX, PsbY, PsbZ, Psb30/Ycf12, at least 3 peripheral proteins of the oxygen-evolving complex and a large number of cofactors. It forms dimeric complexes.

The protein localises to the plastid. The protein resides in the chloroplast thylakoid membrane. Its function is as follows. One of the components of the core complex of photosystem II (PSII). PSII is a light-driven water:plastoquinone oxidoreductase that uses light energy to abstract electrons from H(2)O, generating O(2) and a proton gradient subsequently used for ATP formation. It consists of a core antenna complex that captures photons, and an electron transfer chain that converts photonic excitation into a charge separation. The chain is Photosystem II reaction center protein K from Cucumis sativus (Cucumber).